Consider the following 272-residue polypeptide: Alcohol dehydrogenase-related 31 kDa protein (272 aa).

11–34 contacts NAD(+); it reads YVADCGGIALETSKVLMTKNIAKL. Residue Ser-139 coordinates substrate. The active-site Proton acceptor is the Tyr-152.

It belongs to the short-chain dehydrogenases/reductases (SDR) family.

The chain is Alcohol dehydrogenase-related 31 kDa protein (Adhr) from Drosophila melanogaster (Fruit fly).